Here is a 159-residue protein sequence, read N- to C-terminus: Mediator of RNA polymerase II transcription subunit 10 (159 aa).

The interval Ser54–Leu77 is disordered.

The protein belongs to the Mediator complex subunit 10 family. Component of the Mediator complex.

The protein resides in the nucleus. Component of the Mediator complex, a coactivator involved in the regulated transcription of nearly all RNA polymerase II-dependent genes. Mediator functions as a bridge to convey information from gene-specific regulatory proteins to the basal RNA polymerase II transcription machinery. Mediator is recruited to promoters by direct interactions with regulatory proteins and serves as a scaffold for the assembly of a functional preinitiation complex with RNA polymerase II and the general transcription factors. This Aspergillus fumigatus (strain ATCC MYA-4609 / CBS 101355 / FGSC A1100 / Af293) (Neosartorya fumigata) protein is Mediator of RNA polymerase II transcription subunit 10 (nut2).